A 358-amino-acid polypeptide reads, in one-letter code: 2-oxoisovalerate dehydrogenase subunit beta 2, mitochondrial (358 aa).

Residues Met1–Pro16 constitute a mitochondrion transit peptide. Tyr119 provides a ligand contact to thiamine diphosphate. Gly145, Leu147, Thr148, Asp198, and Asn200 together coordinate K(+).

As to quaternary structure, heterotetramer of alpha and beta chains. Requires thiamine diphosphate as cofactor. In terms of tissue distribution, expressed in the non-photosynthetic organs such as siliques, flowers and roots.

The protein resides in the mitochondrion matrix. It carries out the reaction N(6)-[(R)-lipoyl]-L-lysyl-[protein] + 3-methyl-2-oxobutanoate + H(+) = N(6)-[(R)-S(8)-2-methylpropanoyldihydrolipoyl]-L-lysyl-[protein] + CO2. Functionally, the branched-chain alpha-keto dehydrogenase complex catalyzes the overall conversion of alpha-keto acids to acyl-CoA and CO(2). It contains multiple copies of three enzymatic components: branched-chain alpha-keto acid decarboxylase (E1), lipoamide acyltransferase (E2) and lipoamide dehydrogenase (E3). Required during sugar starvation and acts under the control of a sugar-sensing mechanism involving Ser/Thr kinases and phosphatases. This chain is 2-oxoisovalerate dehydrogenase subunit beta 2, mitochondrial (DIN4), found in Arabidopsis thaliana (Mouse-ear cress).